A 199-amino-acid chain; its full sequence is ATP-dependent Clp protease proteolytic subunit (199 aa).

Serine 97 serves as the catalytic Nucleophile. Residue histidine 122 is part of the active site.

The protein belongs to the peptidase S14 family. Fourteen ClpP subunits assemble into 2 heptameric rings which stack back to back to give a disk-like structure with a central cavity, resembling the structure of eukaryotic proteasomes.

It is found in the cytoplasm. The catalysed reaction is Hydrolysis of proteins to small peptides in the presence of ATP and magnesium. alpha-casein is the usual test substrate. In the absence of ATP, only oligopeptides shorter than five residues are hydrolyzed (such as succinyl-Leu-Tyr-|-NHMec, and Leu-Tyr-Leu-|-Tyr-Trp, in which cleavage of the -Tyr-|-Leu- and -Tyr-|-Trp bonds also occurs).. Functionally, cleaves peptides in various proteins in a process that requires ATP hydrolysis. Has a chymotrypsin-like activity. Plays a major role in the degradation of misfolded proteins. The chain is ATP-dependent Clp protease proteolytic subunit from Pelobacter propionicus (strain DSM 2379 / NBRC 103807 / OttBd1).